Here is a 328-residue protein sequence, read N- to C-terminus: Phenylalanine--tRNA ligase alpha subunit (328 aa).

Glutamate 253 lines the Mg(2+) pocket.

This sequence belongs to the class-II aminoacyl-tRNA synthetase family. Phe-tRNA synthetase alpha subunit type 1 subfamily. Tetramer of two alpha and two beta subunits. The cofactor is Mg(2+).

Its subcellular location is the cytoplasm. The enzyme catalyses tRNA(Phe) + L-phenylalanine + ATP = L-phenylalanyl-tRNA(Phe) + AMP + diphosphate + H(+). The chain is Phenylalanine--tRNA ligase alpha subunit from Actinobacillus pleuropneumoniae serotype 7 (strain AP76).